The chain runs to 299 residues: Putative peptidyl-prolyl cis-trans isomerase jhp_0161 (299 aa).

The first 21 residues, 1 to 21, serve as a signal peptide directing secretion; the sequence is MKKNILNLALVGALSASFLMA. Residues 154 to 253 form the PpiC domain; sequence KQEAHARHIL…FGYHIIYLIS (100 aa).

The enzyme catalyses [protein]-peptidylproline (omega=180) = [protein]-peptidylproline (omega=0). The polypeptide is Putative peptidyl-prolyl cis-trans isomerase jhp_0161 (Helicobacter pylori (strain J99 / ATCC 700824) (Campylobacter pylori J99)).